The chain runs to 222 residues: DnaJ homolog subfamily B member 9 (222 aa).

Residues 1-23 (MATPQSVFVFAICILMITELILA) form the signal peptide. A J domain is found at 26–90 (SYYDILGVPK…NSRKEYDTIG (65 aa)). Residues 91-222 (HSAFTNGKGQ…VTTYTDCSGQ (132 aa)) are divergent targeting domain. Ser133 carries the phosphoserine modification.

Interacts with HSPA5/BiP; interaction is direct. Interacts with ERN1/IRE1 (via the luminal region). Interacts with DERL1. Not N-glycosylated.

It is found in the endoplasmic reticulum lumen. Co-chaperone for Hsp70 protein HSPA5/BiP that acts as a key repressor of the ERN1/IRE1-mediated unfolded protein response (UPR). J domain-containing co-chaperones stimulate the ATPase activity of Hsp70 proteins and are required for efficient substrate recognition by Hsp70 proteins. In the unstressed endoplasmic reticulum, interacts with the luminal region of ERN1/IRE1 and selectively recruits HSPA5/BiP: HSPA5/BiP disrupts the dimerization of the active ERN1/IRE1 luminal region, thereby inactivating ERN1/IRE1. Also involved in endoplasmic reticulum-associated degradation (ERAD) of misfolded proteins. Required for survival of B-cell progenitors and normal antibody production. This Mus musculus (Mouse) protein is DnaJ homolog subfamily B member 9.